A 191-amino-acid chain; its full sequence is Amelogenin, X isoform (191 aa).

The first 16 residues, 1-16, serve as a signal peptide directing secretion; sequence MGTWILFACLLGAAFA. The residue at position 32 (serine 32) is a Phosphoserine. A compositionally biased stretch (low complexity) spans 95 to 117; it reads IPQQPMMPVPGQHSMTPIQHHQP. Positions 95 to 191 are disordered; that stretch reads IPQQPMMPVP…TDKTKREEVD (97 aa). Residues 118 to 171 show a composition bias toward pro residues; it reads NLPPPAQQPYQPQPVQPQPHQPMQPQPPVHPMQPLPPQPPLPPMFPMQPLPPML.

It belongs to the amelogenin family. In terms of assembly, interacts with KRT5. Post-translationally, phosphorylated by FAM20C in vitro.

It localises to the secreted. It is found in the extracellular space. The protein resides in the extracellular matrix. Plays a role in biomineralization. Seems to regulate the formation of crystallites during the secretory stage of tooth enamel development. Thought to play a major role in the structural organization and mineralization of developing enamel. This is Amelogenin, X isoform (AMELX) from Homo sapiens (Human).